The chain runs to 693 residues: Elongation factor G (693 aa).

A tr-type G domain is found at 9-283; it reads ERVRNIGIIA…AVCDYLPSPV (275 aa). GTP-binding positions include 18 to 25, 82 to 86, and 136 to 139; these read AHIDAGKT, DTPGH, and NKMD.

The protein belongs to the TRAFAC class translation factor GTPase superfamily. Classic translation factor GTPase family. EF-G/EF-2 subfamily.

The protein localises to the cytoplasm. Its function is as follows. Catalyzes the GTP-dependent ribosomal translocation step during translation elongation. During this step, the ribosome changes from the pre-translocational (PRE) to the post-translocational (POST) state as the newly formed A-site-bound peptidyl-tRNA and P-site-bound deacylated tRNA move to the P and E sites, respectively. Catalyzes the coordinated movement of the two tRNA molecules, the mRNA and conformational changes in the ribosome. This chain is Elongation factor G, found in Dehalococcoides mccartyi (strain ATCC BAA-2266 / KCTC 15142 / 195) (Dehalococcoides ethenogenes (strain 195)).